A 239-amino-acid chain; its full sequence is NAD-dependent protein deacylase (239 aa).

Positions 1 to 234 (MENLNIVTLT…KKVYDYLREK (234 aa)) constitute a Deacetylase sirtuin-type domain. NAD(+) is bound by residues 11-30 (GAGI…DGLW) and 89-92 (QNVD). Residue His-107 is the Proton acceptor of the active site. The Zn(2+) site is built by Cys-115, Cys-118, Cys-136, and Cys-139. Residues 176-178 (GTS), 202-204 (NPE), and Ala-220 each bind NAD(+).

It belongs to the sirtuin family. Class III subfamily. Requires Zn(2+) as cofactor.

The protein resides in the cytoplasm. It catalyses the reaction N(6)-acetyl-L-lysyl-[protein] + NAD(+) + H2O = 2''-O-acetyl-ADP-D-ribose + nicotinamide + L-lysyl-[protein]. In terms of biological role, NAD-dependent protein deacetylase which modulates the activities of several proteins which are inactive in their acetylated form. The sequence is that of NAD-dependent protein deacylase from Aquifex aeolicus (strain VF5).